A 797-amino-acid polypeptide reads, in one-letter code: Protocadherin beta-9 (797 aa).

The first 26 residues, 1 to 26 (MKTRGFSFPRQRQVLFLFLFWGVSLA), serve as a signal peptide directing secretion. Residues 27–690 (GSGFGRYSVT…AQADLLTVYL (664 aa)) lie on the Extracellular side of the membrane. Cadherin domains lie at 35 to 133 (VTEE…SPVF), 138 to 242 (MVLK…VPQF), 247 to 347 (YETQ…PPEL), 352 to 451 (LSNS…APAF), and 456 to 561 (YTLF…SPFV). The N-linked (GlcNAc...) asparagine glycan is linked to Asn169. An N-linked (GlcNAc...) asparagine glycan is attached at Asn418. The N-linked (GlcNAc...) asparagine glycan is linked to Asn567. The Cadherin 6 domain occupies 568-671 (GSAPCTELVP…LVDGFSQPYL (104 aa)). Residues 691-711 (VVALASVSSLFLLSVLLFVAV) form a helical membrane-spanning segment. At 712–797 (RLCRRSRAAS…TLPNSFGFNY (86 aa)) the chain is on the cytoplasmic side. Residues 777–797 (HRGGKEIEENSTLPNSFGFNY) form a disordered region. Positions 786–797 (NSTLPNSFGFNY) are enriched in polar residues.

Its subcellular location is the cell membrane. Functionally, potential calcium-dependent cell-adhesion protein. May be involved in the establishment and maintenance of specific neuronal connections in the brain. The sequence is that of Protocadherin beta-9 (PCDHB9) from Homo sapiens (Human).